The sequence spans 228 residues: Ion-translocating oxidoreductase complex subunit E (228 aa).

The next 5 helical transmembrane spans lie at 24-44 (LLGL…LGLG), 73-93 (VFVL…NAFF), 95-115 (ELYL…AIIG), 130-150 (LADG…LGAL), and 184-204 (GFLL…LIAL).

Belongs to the NqrDE/RnfAE family. As to quaternary structure, the complex is composed of six subunits: RnfA, RnfB, RnfC, RnfD, RnfE and RnfG.

It localises to the cell inner membrane. Functionally, part of a membrane-bound complex that couples electron transfer with translocation of ions across the membrane. This Thioalkalivibrio sulfidiphilus (strain HL-EbGR7) protein is Ion-translocating oxidoreductase complex subunit E.